The chain runs to 419 residues: Phosphoglycerate kinase (419 aa).

Residues Val24, Asp25, Phe26, Asn27, Arg40, Ser63, His64, Gly66, Arg67, Leu122, Arg123, His169, and Arg170 each coordinate (2R)-3-phosphoglycerate. Gly213 provides a ligand contact to ADP. Gly213 lines the CDP pocket. AMP-binding residues include Ala214 and Lys215. Position 214 (Ala214) interacts with ATP. Ala214 contributes to the Mg(2+) binding site. Mg(2+) contacts are provided by Ala217 and Asp218. Asp218 is a binding site for CDP. An AMP-binding site is contributed by Lys219. Lys219 contacts ATP. Gly237 provides a ligand contact to ADP. Residue Gly237 participates in CDP binding. Residues Gly238 and Gly313 each coordinate AMP. 2 residues coordinate ATP: Gly238 and Gly313. CDP contacts are provided by Gly338 and Phe343. Phe343 provides a ligand contact to ADP. Residue Glu344 coordinates AMP. The ATP site is built by Glu344, Asp375, and Thr376. Position 375 (Asp375) interacts with Mg(2+).

Belongs to the phosphoglycerate kinase family. In terms of assembly, monomer. Requires Mg(2+) as cofactor.

The catalysed reaction is (2R)-3-phosphoglycerate + ATP = (2R)-3-phospho-glyceroyl phosphate + ADP. It functions in the pathway carbohydrate degradation; glycolysis; pyruvate from D-glyceraldehyde 3-phosphate: step 2/5. This is Phosphoglycerate kinase (PGK) from Sterkiella nova (Ciliate).